Here is a 178-residue protein sequence, read N- to C-terminus: Ribosome maturation factor RimM (178 aa).

The PRC barrel domain maps to 99–178 (QGEFYWRDLI…EITVDWDPGF (80 aa)).

The protein belongs to the RimM family. Binds ribosomal protein uS19.

Its subcellular location is the cytoplasm. In terms of biological role, an accessory protein needed during the final step in the assembly of 30S ribosomal subunit, possibly for assembly of the head region. Essential for efficient processing of 16S rRNA. May be needed both before and after RbfA during the maturation of 16S rRNA. It has affinity for free ribosomal 30S subunits but not for 70S ribosomes. In Pseudoalteromonas translucida (strain TAC 125), this protein is Ribosome maturation factor RimM.